The chain runs to 138 residues: ATP synthase epsilon chain (138 aa).

It belongs to the ATPase epsilon chain family. In terms of assembly, F-type ATPases have 2 components, CF(1) - the catalytic core - and CF(0) - the membrane proton channel. CF(1) has five subunits: alpha(3), beta(3), gamma(1), delta(1), epsilon(1). CF(0) has three main subunits: a, b and c.

The protein resides in the cell inner membrane. Produces ATP from ADP in the presence of a proton gradient across the membrane. The protein is ATP synthase epsilon chain of Geobacter sp. (strain M21).